The sequence spans 2153 residues: Genome polyprotein (2153 aa).

Gly2 is lipidated: N-myristoyl glycine; by host. The Cytoplasmic segment spans residues 2–1466 (GAQVSRQNVG…DLNIANSIIT (1465 aa)). The tract at residues 565–582 (PITQNPVERYVDEVLNEV) is amphipathic alpha-helix. Active-site for protease 2A activity residues include His871 and Asp888. Residues Cys905 and Cys907 each coordinate Zn(2+). Catalysis depends on Cys959, which acts as the For protease 2A activity. Positions 965 and 967 each coordinate Zn(2+). The membrane-binding stretch occupies residues 1091–1160 (SDSWLKKFTE…NLRAADTNTQ (70 aa)). The oligomerization stretch occupies residues 1091–1224 (SDSWLKKFTE…PPGTGKSITT (134 aa)). Residues 1112–1116 (GNKIS) form an RNA-binding region. Residues 1186-1346 (KRIKVLYHKC…YKDNQGKLDV (161 aa)) enclose the SF3 helicase domain. Residues Cys1353, Cys1364, and Cys1369 each coordinate Zn(2+). The C4-type; degenerate zinc-finger motif lies at 1353–1369 (CDVDSKIGNAKCCPFVC). The interval 1396–1403 (EDKRRRQV) is RNA-binding. Residues 1407–1412 (MSAIFQ) form an oligomerization region. The stretch at 1467-1482 (IIANIISIAGIIYIIY) is an intramembrane region. The Cytoplasmic segment spans residues 1483–2153 (KLFCSLQGPY…LLRHEWYEKF (671 aa)). Tyr1492 is modified (O-(5'-phospho-RNA)-tyrosine). The Peptidase C3 domain occupies 1511-1689 (GPEEEFGMSI…FSSMLLRSYF (179 aa)). Active-site for protease 3C activity residues include His1550, Glu1581, and Cys1657. Positions 1921–2034 (DCIMAFDYTN…SYKYKLDMEA (114 aa)) constitute a RdRp catalytic domain. The Mg(2+) site is built by Asp1927 and Asp2020.

The protein belongs to the picornaviruses polyprotein family. As to quaternary structure, interacts with capsid protein VP1 and capsid protein VP3 to form heterotrimeric protomers. Interacts with capsid protein VP0, and capsid protein VP3 to form heterotrimeric protomers. Five protomers subsequently associate to form pentamers which serve as building blocks for the capsid. Interacts with capsid protein VP2, capsid protein VP3 and capsid protein VP4 following cleavage of capsid protein VP0. In terms of assembly, interacts with capsid protein VP1 and capsid protein VP3 in the mature capsid. As to quaternary structure, interacts with capsid protein VP0 and capsid protein VP1 to form heterotrimeric protomers. Five protomers subsequently associate to form pentamers which serve as building blocks for the capsid. Interacts with capsid protein VP4 in the mature capsid. Interacts with protein 2C; this interaction may be important for virion morphogenesis. Interacts with capsid protein VP1 and capsid protein VP3. In terms of assembly, homodimer. As to quaternary structure, homohexamer; forms a hexameric ring structure with 6-fold symmetry characteristic of AAA+ ATPases. Interacts (via N-terminus) with host RTN3 (via reticulon domain); this interaction is important for viral replication. Interacts with capsid protein VP3; this interaction may be important for virion morphogenesis. Interacts with protein 3CD. In terms of assembly, homodimer. Interacts with host GBF1. Interacts (via GOLD domain) with host ACBD3 (via GOLD domain); this interaction allows the formation of a viral protein 3A/ACBD3 heterotetramer with a 2:2 stoichiometry, which will stimulate the recruitment of host PI4KB in order to synthesize PI4P at the viral RNA replication sites. As to quaternary structure, interacts with RNA-directed RNA polymerase. Interacts with protein 3AB and with RNA-directed RNA polymerase. In terms of assembly, interacts with Viral protein genome-linked and with protein 3CD. It depends on Mg(2+) as a cofactor. In terms of processing, specific enzymatic cleavages in vivo by the viral proteases yield processing intermediates and the mature proteins. Post-translationally, myristoylation is required for the formation of pentamers during virus assembly. Further assembly of 12 pentamers and a molecule of genomic RNA generates the provirion. During virion maturation, immature virions are rendered infectious following cleavage of VP0 into VP4 and VP2. This maturation seems to be an autocatalytic event triggered by the presence of RNA in the capsid and it is followed by a conformational change infectious virion. In terms of processing, myristoylation is required during RNA encapsidation and formation of the mature virus particle. Post-translationally, VPg is uridylylated by the polymerase into VPg-pUpU. This acts as a nucleotide-peptide primer for the genomic RNA replication.

It is found in the virion. It localises to the host cytoplasm. The protein localises to the host cytoplasmic vesicle membrane. The protein resides in the host nucleus. The catalysed reaction is a ribonucleoside 5'-triphosphate + H2O = a ribonucleoside 5'-diphosphate + phosphate + H(+). It carries out the reaction Selective cleavage of Tyr-|-Gly bond in the picornavirus polyprotein.. The enzyme catalyses RNA(n) + a ribonucleoside 5'-triphosphate = RNA(n+1) + diphosphate. It catalyses the reaction Selective cleavage of Gln-|-Gly bond in the poliovirus polyprotein. In other picornavirus reactions Glu may be substituted for Gln, and Ser or Thr for Gly.. Its activity is regulated as follows. Replication or transcription is subject to high level of random mutations by the nucleotide analog ribavirin. Functionally, forms an icosahedral capsid of pseudo T=3 symmetry with capsid proteins VP2 and VP3. The capsid is 300 Angstroms in diameter, composed of 60 copies of each capsid protein and enclosing the viral positive strand RNA genome. Capsid protein VP1 mainly forms the vertices of the capsid. Capsid protein VP1 interacts with host cell receptor to provide virion attachment to target host cells. This attachment induces virion internalization. Tyrosine kinases are probably involved in the entry process. After binding to its receptor, the capsid undergoes conformational changes. Capsid protein VP1 N-terminus (that contains an amphipathic alpha-helix) and capsid protein VP4 are externalized. Together, they shape a pore in the host membrane through which viral genome is translocated to host cell cytoplasm. In terms of biological role, forms an icosahedral capsid of pseudo T=3 symmetry with capsid proteins VP2 and VP3. The capsid is 300 Angstroms in diameter, composed of 60 copies of each capsid protein and enclosing the viral positive strand RNA genome. Lies on the inner surface of the capsid shell. After binding to the host receptor, the capsid undergoes conformational changes. Capsid protein VP4 is released, Capsid protein VP1 N-terminus is externalized, and together, they shape a pore in the host membrane through which the viral genome is translocated into the host cell cytoplasm. Its function is as follows. Component of immature procapsids, which is cleaved into capsid proteins VP4 and VP2 after maturation. Allows the capsid to remain inactive before the maturation step. Functionally, cysteine protease that cleaves viral polyprotein and specific host proteins. It is responsible for the autocatalytic cleavage between the P1 and P2 regions, which is the first cleavage occurring in the polyprotein. Also cleaves the host translation initiation factor EIF4G1, in order to shut down the capped cellular mRNA translation. Inhibits the host nucleus-cytoplasm protein and RNA trafficking by cleaving host members of the nuclear pores. Counteracts stress granule formation probably by antagonizing its assembly or promoting its dissassembly. In terms of biological role, plays an essential role in the virus replication cycle by acting as a viroporin. Creates a pore in the host endoplasmic reticulum and as a consequence releases Ca2+ in the cytoplasm of infected cell. In turn, high levels of cytoplasmic calcium may trigger membrane trafficking and transport of viral ER-associated proteins to viroplasms, sites of viral genome replication. Induces and associates with structural rearrangements of intracellular membranes. Displays RNA-binding, nucleotide binding and NTPase activities. May play a role in virion morphogenesis and viral RNA encapsidation by interacting with the capsid protein VP3. Its function is as follows. Localizes the viral replication complex to the surface of membranous vesicles. It inhibits host cell endoplasmic reticulum-to-Golgi apparatus transport and causes the disassembly of the Golgi complex, possibly through GBF1 interaction. This would result in depletion of MHC, trail receptors and IFN receptors at the host cell surface. Plays an essential role in viral RNA replication by recruiting ACBD3 and PI4KB at the viral replication sites, thereby allowing the formation of the rearranged membranous structures where viral replication takes place. Functionally, acts as a primer for viral RNA replication and remains covalently bound to viral genomic RNA. VPg is uridylylated prior to priming replication into VPg-pUpU. The oriI viral genomic sequence may act as a template for this. The VPg-pUpU is then used as primer on the genomic RNA poly(A) by the RNA-dependent RNA polymerase to replicate the viral genome. During genome replication, the VPg-RNA linkage is removed by the host TDP2, thereby accelerating replication. During the late stage of the replication cycle, host TDP2 is excluded from sites of viral RNA synthesis and encapsidation, allowing for the generation of progeny virions. In terms of biological role, involved in the viral replication complex and viral polypeptide maturation. It exhibits protease activity with a specificity and catalytic efficiency that is different from protease 3C. Protein 3CD lacks polymerase activity. Protein 3CD binds to the 5'UTR of the viral genome. Major viral protease that mediates proteolytic processing of the polyprotein. Cleaves host EIF5B, contributing to host translation shutoff. Also cleaves host PABPC1, contributing to host translation shutoff. Cleaves host NLRP1, triggers host N-glycine-mediated degradation of the autoinhibitory NLRP1 N-terminal fragment. Its function is as follows. Replicates the viral genomic RNA on the surface of intracellular membranes. May form linear arrays of subunits that propagate along a strong head-to-tail interaction called interface-I. Covalently attaches UMP to a tyrosine of VPg, which is used to prime RNA synthesis. The positive stranded RNA genome is first replicated at virus induced membranous vesicles, creating a dsRNA genomic replication form. This dsRNA is then used as template to synthesize positive stranded RNA genomes. ss(+)RNA genomes are either translated, replicated or encapsidated. This chain is Genome polyprotein, found in Human rhinovirus 16 (HRV-16).